We begin with the raw amino-acid sequence, 202 residues long: Pyridoxal 5'-phosphate synthase subunit PdxT (202 aa).

50–52 (GES) is an L-glutamine binding site. C82 serves as the catalytic Nucleophile. Residues R111 and 140–141 (IR) contribute to the L-glutamine site. Catalysis depends on charge relay system residues H176 and E178.

The protein belongs to the glutaminase PdxT/SNO family. As to quaternary structure, in the presence of PdxS, forms a dodecamer of heterodimers. Only shows activity in the heterodimer.

It carries out the reaction aldehydo-D-ribose 5-phosphate + D-glyceraldehyde 3-phosphate + L-glutamine = pyridoxal 5'-phosphate + L-glutamate + phosphate + 3 H2O + H(+). The enzyme catalyses L-glutamine + H2O = L-glutamate + NH4(+). It participates in cofactor biosynthesis; pyridoxal 5'-phosphate biosynthesis. Functionally, catalyzes the hydrolysis of glutamine to glutamate and ammonia as part of the biosynthesis of pyridoxal 5'-phosphate. The resulting ammonia molecule is channeled to the active site of PdxS. The sequence is that of Pyridoxal 5'-phosphate synthase subunit PdxT from Streptomyces coelicolor (strain ATCC BAA-471 / A3(2) / M145).